We begin with the raw amino-acid sequence, 325 residues long: Homocysteine S-methyltransferase 2 (325 aa).

The Hcy-binding domain occupies 6 to 321 (LKQFLADNPK…KDIQEISAAV (316 aa)). Position 138 is a phosphothreonine (Thr138). Zn(2+) is bound by residues Cys239, Cys306, and Cys307.

Zn(2+) serves as cofactor.

The protein localises to the cytoplasm. The protein resides in the nucleus. It carries out the reaction S-methyl-L-methionine + L-homocysteine = 2 L-methionine + H(+). In terms of biological role, homocysteine S-methyltransferase involved in the conversion of S-adenosylmethionine (AdoMet) to methionine to control the methionine/AdoMet ratio. Also converts S-methylmethionine (SMM) to methionine. The sequence is that of Homocysteine S-methyltransferase 2 (SAM4) from Saccharomyces cerevisiae (strain ATCC 204508 / S288c) (Baker's yeast).